The following is a 102-amino-acid chain: MAGQAFRKFLPLFDRVLVERSAAETVTKGGIMLPEKSQGKVLQATVVAVGSGGKGKSGEIEPVSVKVGDKVLLPEYGGTKVVLDDKDYFLFRDSDILGKYVD.

Ala-2 carries the N-acetylalanine modification. Lys-8 carries the N6-acetyllysine modification. Lys-28 is subject to N6-succinyllysine. Lys-40 carries the post-translational modification N6-acetyllysine; alternate. An N6-malonyllysine; alternate mark is found at Lys-40, Lys-54, and Lys-56. 3 positions are modified to N6-succinyllysine; alternate: Lys-40, Lys-54, and Lys-56. Position 56 is an N6-acetyllysine; alternate (Lys-56). Phosphoserine is present on Ser-57. 2 positions are modified to N6-acetyllysine; alternate: Lys-66 and Lys-70. Lys-66 and Lys-70 each carry N6-succinyllysine; alternate. Thr-79 bears the Phosphothreonine mark. Lys-80 and Lys-86 each carry N6-acetyllysine; alternate. N6-succinyllysine; alternate occurs at positions 80 and 86. Position 99 is an N6-acetyllysine (Lys-99).

Belongs to the GroES chaperonin family. As to quaternary structure, homoheptamer arranged in a ring structure. 2 heptameric Hsp10 rings interact with a Hsp60 tetradecamer in the structure of a back-to-back double heptameric ring to form the symmetrical football complex.

It localises to the mitochondrion matrix. Co-chaperonin implicated in mitochondrial protein import and macromolecular assembly. Together with Hsp60, facilitates the correct folding of imported proteins. May also prevent misfolding and promote the refolding and proper assembly of unfolded polypeptides generated under stress conditions in the mitochondrial matrix. The functional units of these chaperonins consist of heptameric rings of the large subunit Hsp60, which function as a back-to-back double ring. In a cyclic reaction, Hsp60 ring complexes bind one unfolded substrate protein per ring, followed by the binding of ATP and association with 2 heptameric rings of the co-chaperonin Hsp10. This leads to sequestration of the substrate protein in the inner cavity of Hsp60 where, for a certain period of time, it can fold undisturbed by other cell components. Synchronous hydrolysis of ATP in all Hsp60 subunits results in the dissociation of the chaperonin rings and the release of ADP and the folded substrate protein. This chain is 10 kDa heat shock protein, mitochondrial (Hspe1), found in Mus musculus (Mouse).